A 309-amino-acid polypeptide reads, in one-letter code: Isoflavone reductase homolog IRL (309 aa).

NADP(+) is bound by residues 12-18 (GGTGYLG), Arg37, and Lys46. Lys134 serves as the catalytic Proton acceptor. Arg138 contacts NADP(+).

This sequence belongs to the NmrA-type oxidoreductase family. Isoflavone reductase subfamily. In terms of assembly, monomer.

It localises to the cytoplasm. The protein operates within alkaloid biosynthesis. Reductase that may be involved in a late step of alkaloid biosynthesis. In Zea mays (Maize), this protein is Isoflavone reductase homolog IRL.